Here is a 150-residue protein sequence, read N- to C-terminus: Lipoprotein signal peptidase (150 aa).

The next 2 helical transmembrane spans lie at 58–78 (FFII…FKST) and 85–107 (SFSL…GYVV). Active-site residues include Asp108 and Asp122. Residues 117 to 137 (VFNLADFFITGGVLLLTFLIL) form a helical membrane-spanning segment.

The protein belongs to the peptidase A8 family.

The protein resides in the cell membrane. It catalyses the reaction Release of signal peptides from bacterial membrane prolipoproteins. Hydrolyzes -Xaa-Yaa-Zaa-|-(S,diacylglyceryl)Cys-, in which Xaa is hydrophobic (preferably Leu), and Yaa (Ala or Ser) and Zaa (Gly or Ala) have small, neutral side chains.. It functions in the pathway protein modification; lipoprotein biosynthesis (signal peptide cleavage). In terms of biological role, this protein specifically catalyzes the removal of signal peptides from prolipoproteins. This is Lipoprotein signal peptidase from Caldicellulosiruptor bescii (strain ATCC BAA-1888 / DSM 6725 / KCTC 15123 / Z-1320) (Anaerocellum thermophilum).